Reading from the N-terminus, the 312-residue chain is MKALWAVLLATLLTGCLAEGEPEVTDQLSWQSNQPWEQALNRFWDYLRWVQTLSDQVQEELQNSQVTQELTVLMEDTMTEVKAYKKELEEQLGPVAEETRARLAKEVQAAQARLGADMEDLRNRLGQYRNEVHTMLGQNTEELRSRLSTHLRKMRKRLMRDAEDLQKRLAVYKAGAREGAERGVSAIRERLGPLVEQGRQRTANLGAGAAQPLRDRAQALSERLRGRLEEVGNQARDRLEEMREHMEEVRSKMEEQTQQIRLQAEIFQARLKSWFEPLVEDMHRQLANLVEKIQSSVATNSVLSTSVPQENQ.

An N-terminal signal peptide occupies residues 1–18 (MKALWAVLLATLLTGCLA). A run of 8 repeats spans residues 72–93 (VLME…EQLG), 94–115 (PVAE…ARLG), 116–137 (ADME…TMLG), 138–159 (QNTE…KRLM), 160–181 (RDAE…EGAE), 182–203 (RGVS…QRTA), 204–225 (NLGA…ERLR), and 226–247 (GRLE…EHME). The interval 72–247 (VLMEDTMTEV…RLEEMREHME (176 aa)) is 8 X 22 AA approximate tandem repeats. Residue M135 is modified to Methionine sulfoxide. Residues 150–160 (HLRKMRKRLMR) are LDL and other lipoprotein receptors binding. Residues 150-160 (HLRKMRKRLMR) form an LDL receptor binding region. 154–157 (MRKR) contacts heparin. Positions 202–282 (TANLGAGAAQ…SWFEPLVEDM (81 aa)) are lipid-binding and lipoprotein association. 221–228 (SERLRGRL) is a binding site for heparin. The interval 258 to 312 (QQIRLQAEIFQARLKSWFEPLVEDMHRQLANLVEKIQSSVATNSVLSTSVPQENQ) is homooligomerization. Residues 270 to 282 (RLKSWFEPLVEDM) form a specificity for association with VLDL region.

It belongs to the apolipoprotein A1/A4/E family. Homotetramer. May interact with ABCA1; functionally associated with ABCA1 in the biogenesis of HDLs. May interact with APP/A4 amyloid-beta peptide; the interaction is extremely stable in vitro but its physiological significance is unclear. May interact with MAPT. May interact with MAP2. In the cerebrospinal fluid, interacts with secreted SORL1. Interacts with PMEL; this allows the loading of PMEL luminal fragment on ILVs to induce fibril nucleation. Post-translationally, APOE exists as multiple glycosylated and sialylated glycoforms within cells and in plasma. The extent of glycosylation and sialylation are tissue and context specific. Glycated in plasma VLDL. In terms of processing, phosphorylated by FAM20C in the extracellular medium.

It is found in the secreted. The protein localises to the extracellular space. Its subcellular location is the extracellular matrix. It localises to the extracellular vesicle. The protein resides in the endosome. It is found in the multivesicular body. Its function is as follows. APOE is an apolipoprotein, a protein associating with lipid particles, that mainly functions in lipoprotein-mediated lipid transport between organs via the plasma and interstitial fluids. APOE is a core component of plasma lipoproteins and is involved in their production, conversion and clearance. Apolipoproteins are amphipathic molecules that interact both with lipids of the lipoprotein particle core and the aqueous environment of the plasma. As such, APOE associates with chylomicrons, chylomicron remnants, very low density lipoproteins (VLDL) and intermediate density lipoproteins (IDL) but shows a preferential binding to high-density lipoproteins (HDL). It also binds a wide range of cellular receptors including the LDL receptor/LDLR, the LDL receptor-related proteins LRP1, LRP2 and LRP8 and the very low-density lipoprotein receptor/VLDLR that mediate the cellular uptake of the APOE-containing lipoprotein particles. Finally, APOE also has a heparin-binding activity and binds heparan-sulfate proteoglycans on the surface of cells, a property that supports the capture and the receptor-mediated uptake of APOE-containing lipoproteins by cells. A main function of APOE is to mediate lipoprotein clearance through the uptake of chylomicrons, VLDLs, and HDLs by hepatocytes. APOE is also involved in the biosynthesis by the liver of VLDLs as well as their uptake by peripheral tissues ensuring the delivery of triglycerides and energy storage in muscle, heart and adipose tissues. By participating in the lipoprotein-mediated distribution of lipids among tissues, APOE plays a critical role in plasma and tissues lipid homeostasis. APOE is also involved in two steps of reverse cholesterol transport, the HDLs-mediated transport of cholesterol from peripheral tissues to the liver, and thereby plays an important role in cholesterol homeostasis. First, it is functionally associated with ABCA1 in the biogenesis of HDLs in tissues. Second, it is enriched in circulating HDLs and mediates their uptake by hepatocytes. APOE also plays an important role in lipid transport in the central nervous system, regulating neuron survival and sprouting. This Arvicanthis niloticus (African grass rat) protein is Apolipoprotein E (Apoe).